The following is a 307-amino-acid chain: Transcription initiation factor IIB (307 aa).

A TFIIB-type zinc finger spans residues Phe-11–Glu-42. 4 residues coordinate Zn(2+): Cys-15, Cys-18, Cys-34, and Cys-37. The segment at Pro-48–Pro-69 is disordered. The span at Pro-50–Pro-69 shows a compositional bias: basic and acidic residues. Tandem repeats lie at residues Leu-123–Leu-207 and Asp-218–Glu-299.

It belongs to the TFIIB family.

Its function is as follows. Stabilizes TBP binding to an archaeal box-A promoter. Also responsible for recruiting RNA polymerase II to the pre-initiation complex (DNA-TBP-TFIIB). The chain is Transcription initiation factor IIB from Methanopyrus kandleri (strain AV19 / DSM 6324 / JCM 9639 / NBRC 100938).